We begin with the raw amino-acid sequence, 818 residues long: Cytosolic phospholipase A2 delta (818 aa).

The C2 domain maps to 5 to 124 (SPGGPPGHPY…LPGKLLRKTF (120 aa)). 5 residues coordinate Ca(2+): D38, D44, D94, D96, and D102. The 546-residue stretch at 273-818 (GCPEELAVHL…LEARPPRAQT (546 aa)) folds into the PLA2c domain. Residue 330–331 (GG) coordinates substrate. S361 functions as the Nucleophile in the catalytic mechanism. D647 acts as the Proton acceptor in catalysis.

Requires Ca(2+) as cofactor. In terms of tissue distribution, expressed in stratified squamous epithelia, such as those in skin and cervix, but not in other tissues. Strongly expressed in the upper spinous layer of the psoriatic epidermis, expressed weakly and discontinuously in atopic dermatitis and mycosis fungoides, and not detected in the epidermis of normal skin.

Its subcellular location is the cytoplasm. The protein resides in the cytosol. It is found in the membrane. The enzyme catalyses a 1,2-diacyl-sn-glycero-3-phosphocholine + H2O = a 1-acyl-sn-glycero-3-phosphocholine + a fatty acid + H(+). The catalysed reaction is 1-hexadecanoyl-2-(5Z,8Z,11Z,14Z-eicosatetraenoyl)-sn-glycero-3-phosphocholine + H2O = 1-hexadecanoyl-sn-glycero-3-phosphocholine + (5Z,8Z,11Z,14Z)-eicosatetraenoate + H(+). It catalyses the reaction 1-hexadecanoyl-2-(9Z,12Z-octadecadienoyl)-sn-glycero-3-phosphocholine + H2O = (9Z,12Z)-octadecadienoate + 1-hexadecanoyl-sn-glycero-3-phosphocholine + H(+). It carries out the reaction 1-hexadecanoyl-2-(9Z-octadecenoyl)-sn-glycero-3-phosphocholine + H2O = 1-hexadecanoyl-sn-glycero-3-phosphocholine + (9Z)-octadecenoate + H(+). The enzyme catalyses 1-hexadecanoyl-2-(5Z,8Z,11Z,14Z-eicosatetraenoyl)-sn-glycero-3-phosphoethanolamine + H2O = 1-hexadecanoyl-sn-glycero-3-phosphoethanolamine + (5Z,8Z,11Z,14Z)-eicosatetraenoate + H(+). The catalysed reaction is 1-hexadecanoyl-2-(9Z,12Z-octadecadienoyl)-sn-glycero-3-phosphoethanolamine + H2O = 1-hexadecanoyl-sn-glycero-3-phosphoethanolamine + (9Z,12Z)-octadecadienoate + H(+). The protein operates within lipid metabolism; fatty acid metabolism. With respect to regulation, stimulated by cytosolic Ca(2+). Its function is as follows. Calcium-dependent phospholipase A2 that selectively hydrolyzes glycerophospholipids in the sn-2 position. Has a preference for linoleic acid at the sn-2 position. The chain is Cytosolic phospholipase A2 delta from Homo sapiens (Human).